The chain runs to 318 residues: Taste receptor type 2 member 60 (318 aa).

Topologically, residues Met-1–Val-7 are extracellular. Residues Leu-8–Arg-28 traverse the membrane as a helical segment. The Cytoplasmic segment spans residues Leu-29–Ala-40. The chain crosses the membrane as a helical span at residues Ala-41–Ser-61. Residues Leu-62–Pro-88 lie on the Extracellular side of the membrane. The helical transmembrane segment at Tyr-89–Trp-109 threads the bilayer. Residues Ser-110 to Pro-128 are Cytoplasmic-facing. A helical membrane pass occupies residues Val-129–Val-149. Topologically, residues Gly-150–Asp-183 are extracellular. A glycan (N-linked (GlcNAc...) asparagine) is linked at Asn-179. Residues Ser-184–Met-204 traverse the membrane as a helical segment. Residues Pro-205–Phe-234 lie on the Cytoplasmic side of the membrane. Residues Arg-235–Leu-255 traverse the membrane as a helical segment. Topologically, residues Phe-256–Val-264 are extracellular. The helical transmembrane segment at Phe-265–Ile-285 threads the bilayer. Topologically, residues Tyr-286–Pro-318 are cytoplasmic.

The protein belongs to the G-protein coupled receptor T2R family. Expressed in subsets of taste receptor cells of the tongue and exclusively in gustducin-positive cells.

It localises to the membrane. Receptor that may play a role in the perception of bitterness and is gustducin-linked. May play a role in sensing the chemical composition of the gastrointestinal content. The activity of this receptor may stimulate alpha gustducin, mediate PLC-beta-2 activation and lead to the gating of TRPM5. The sequence is that of Taste receptor type 2 member 60 (TAS2R60) from Homo sapiens (Human).